Reading from the N-terminus, the 219-residue chain is MSHYRQRFLQLALDSNALCFGEFTLKSGRISPYFFNAGHFNSGAKTAALAQCYADAIDAANMNFDLVFGPAYKGIPLATALACEYARRERDLLLTFNRKEVKNHGEGGTLIGAPLNGRKILIIDDVITAGTAIREALRIIRNAGGTPTGIAVALNRQEIASETNRQSSVQALMAETGIPVVAIATLSDLLAFVEENASLAKFYEPLLAYKTHYGTEASD.

Lysine 26 lines the 5-phospho-alpha-D-ribose 1-diphosphate pocket. 34-35 (FF) contributes to the orotate binding site. 5-phospho-alpha-D-ribose 1-diphosphate is bound by residues 72–73 (YK), arginine 98, lysine 99, lysine 102, histidine 104, and 124–132 (DDVITAGTA). Orotate is bound by residues threonine 128 and arginine 156.

It belongs to the purine/pyrimidine phosphoribosyltransferase family. PyrE subfamily. Homodimer. Mg(2+) serves as cofactor.

It catalyses the reaction orotidine 5'-phosphate + diphosphate = orotate + 5-phospho-alpha-D-ribose 1-diphosphate. The protein operates within pyrimidine metabolism; UMP biosynthesis via de novo pathway; UMP from orotate: step 1/2. Catalyzes the transfer of a ribosyl phosphate group from 5-phosphoribose 1-diphosphate to orotate, leading to the formation of orotidine monophosphate (OMP). The polypeptide is Orotate phosphoribosyltransferase (Xylella fastidiosa (strain M23)).